We begin with the raw amino-acid sequence, 471 residues long: Venom prothrombin activator vestarin-D2 (471 aa).

The N-terminal stretch at 1–20 (MAPQLLLCLILTFLWSLPEA) is a signal peptide. A propeptide spanning residues 21–40 (ESNVFLKSNVANRFLQRTKR) is cleaved from the precursor. Residues 41–86 (ANSIFEEIRPGNIERECVEEKCSKEEAREVFQDNEKTEAFWTVYVD) form the Gla domain. E46, E47, E54, E56, E59, E60, E65, E66, E69, and E75 each carry 4-carboxyglutamate. C57 and C62 are joined by a disulfide. The region spanning 86–122 (DGDQCLSNPCHYRGTCKDGIGSYTCTCLPGYEGKNCE) is the EGF-like 1; calcium-binding domain. 10 disulfides stabilise this stretch: C90–C101, C95–C110, C112–C121, C129–C140, C136–C149, C151–C164, C172–C333, C233–C238, C381–C395, and C406–C434. S92 carries an O-linked (Hex...) serine glycan. Residues 129–164 (CRLFNGNCWHFCKTVQNDTQCSCAEGYRLGVDGFSC) form the EGF-like 2 domain. Positions 182-226 (REASLPDFHFSDDYDAIDENNLVETVQSQSATLLKKSDNPSPDIR) are cleaved as a propeptide — activation peptide. Residues 227–458 (IVSGLDCKLG…FIPWIKTIMR (232 aa)) enclose the Peptidase S1 domain. H268 (charge relay system) is an active-site residue. A glycan (N-linked (GlcNAc...) asparagine) is linked at N271. D313 functions as the Charge relay system in the catalytic mechanism. The Charge relay system role is filled by S410.

The protein belongs to the peptidase S1 family. Snake venom subfamily. As to quaternary structure, heterodimer of a light chain and a heavy chain; disulfide-linked. The vitamin K-dependent, enzymatic carboxylation of some glutamate residues allows the modified protein to bind calcium. Expressed by the venom gland.

The protein localises to the secreted. The enzyme catalyses Selective cleavage of Arg-|-Thr and then Arg-|-Ile bonds in prothrombin to form thrombin.. Snake prothrombin activator that attacks the hemostatic system of prey. This protein is functionally similar to blood coagulation factor Xa. The protein is Venom prothrombin activator vestarin-D2 of Demansia vestigiata (Lesser black whip snake).